Reading from the N-terminus, the 249-residue chain is Methionine aminopeptidase (249 aa).

Residue H77 participates in substrate binding. D94, D105, and H168 together coordinate a divalent metal cation. A substrate-binding site is contributed by H175. A divalent metal cation contacts are provided by E201 and E232.

It belongs to the peptidase M24A family. Methionine aminopeptidase type 1 subfamily. Monomer. Co(2+) serves as cofactor. It depends on Zn(2+) as a cofactor. The cofactor is Mn(2+). Fe(2+) is required as a cofactor.

It catalyses the reaction Release of N-terminal amino acids, preferentially methionine, from peptides and arylamides.. Its function is as follows. Removes the N-terminal methionine from nascent proteins. The N-terminal methionine is often cleaved when the second residue in the primary sequence is small and uncharged (Met-Ala-, Cys, Gly, Pro, Ser, Thr, or Val). Requires deformylation of the N(alpha)-formylated initiator methionine before it can be hydrolyzed. The sequence is that of Methionine aminopeptidase from Clostridium perfringens (strain 13 / Type A).